An 859-amino-acid polypeptide reads, in one-letter code: Envelope glycoprotein (859 aa).

Positions 1–6 (MVSIAF) are excised as a propeptide. Topologically, residues 7–614 (YGGIPGGIST…KDLWSHIGNW (608 aa)) are extracellular. Asparagine 40, asparagine 112, asparagine 141, asparagine 148, asparagine 184, asparagine 201, asparagine 214, asparagine 233, asparagine 244, asparagine 282, asparagine 313, asparagine 340, asparagine 346, asparagine 368, asparagine 399, asparagine 406, asparagine 411, and asparagine 422 each carry an N-linked (GlcNAc...) asparagine; by host glycan. The interval 446–466 (FGISAIVAAIVAATAIAASAT) is fusion peptide. Residues asparagine 483 and asparagine 490 are each glycosylated (N-linked (GlcNAc...) asparagine; by host). Residues 498 to 513 (LIERQIKILYAMILQT) are immunosuppression. N-linked (GlcNAc...) asparagine; by host glycans are attached at residues asparagine 550 and asparagine 557. Coiled coils occupy residues 576 to 624 (ILTI…SIIK) and 663 to 699 (KKFYHKHASREDTWDQAQHNIHLAGVTGGSGDKYCKQ). A helical membrane pass occupies residues 615-635 (IPGLGASIIKYIVMFLLIYLL). Residues 636-859 (LTSSPKILRA…TSHVSMPQYV (224 aa)) lie on the Cytoplasmic side of the membrane.

The mature envelope protein (Env) consists of a trimer of SU-TM heterodimers attached by noncovalent interactions or by a labile interchain disulfide bond. Post-translationally, specific enzymatic cleavages in vivo yield mature proteins. Envelope glycoproteins are synthesized as an inactive precursor that is N-glycosylated and processed likely by host cell furin or by a furin-like protease in the Golgi to yield the mature SU and TM proteins. The cleavage site between SU and TM requires the minimal sequence [KR]-X-[KR]-R.

The protein localises to the virion membrane. It is found in the host cell membrane. Its function is as follows. The surface protein (SU) attaches the virus to the host cell by binding to its receptor. This interaction triggers the refolding of the transmembrane protein (TM) and is thought to activate its fusogenic potential by unmasking its fusion peptide. Fusion occurs at the host cell plasma membrane. In terms of biological role, the transmembrane protein (TM) acts as a class I viral fusion protein. Under the current model, the protein has at least 3 conformational states: pre-fusion native state, pre-hairpin intermediate state, and post-fusion hairpin state. During viral and target cell membrane fusion, the coiled coil regions (heptad repeats) assume a trimer-of-hairpins structure, positioning the fusion peptide in close proximity to the C-terminal region of the ectodomain. The formation of this structure appears to drive apposition and subsequent fusion of viral and target cell membranes. Membranes fusion leads to delivery of the nucleocapsid into the cytoplasm. The protein is Envelope glycoprotein (env) of Equus asinus (Donkey).